Reading from the N-terminus, the 48-residue chain is ATP synthase protein 8 (48 aa).

Residues 16–36 traverse the membrane as a helical segment; it reads GFLLMTILLVLFSQFFLPMIL.

The protein belongs to the ATPase protein 8 family. As to quaternary structure, F-type ATPases have 2 components, CF(1) - the catalytic core - and CF(0) - the membrane proton channel.

It is found in the mitochondrion membrane. Its function is as follows. Mitochondrial membrane ATP synthase (F(1)F(0) ATP synthase or Complex V) produces ATP from ADP in the presence of a proton gradient across the membrane which is generated by electron transport complexes of the respiratory chain. F-type ATPases consist of two structural domains, F(1) - containing the extramembraneous catalytic core and F(0) - containing the membrane proton channel, linked together by a central stalk and a peripheral stalk. During catalysis, ATP synthesis in the catalytic domain of F(1) is coupled via a rotary mechanism of the central stalk subunits to proton translocation. Part of the complex F(0) domain. Minor subunit located with subunit a in the membrane. The polypeptide is ATP synthase protein 8 (ATP8) (Vanderwaltozyma polyspora (strain ATCC 22028 / DSM 70294 / BCRC 21397 / CBS 2163 / NBRC 10782 / NRRL Y-8283 / UCD 57-17) (Kluyveromyces polysporus)).